We begin with the raw amino-acid sequence, 614 residues long: Dihydroxy-acid dehydratase (614 aa).

Asp81 is a binding site for Mg(2+). Cys122 contributes to the [2Fe-2S] cluster binding site. Residues Asp123 and Lys124 each coordinate Mg(2+). N6-carboxylysine is present on Lys124. Cys195 provides a ligand contact to [2Fe-2S] cluster. Residue Glu491 coordinates Mg(2+). Ser517 (proton acceptor) is an active-site residue.

It belongs to the IlvD/Edd family. In terms of assembly, homodimer. It depends on [2Fe-2S] cluster as a cofactor. The cofactor is Mg(2+).

It catalyses the reaction (2R)-2,3-dihydroxy-3-methylbutanoate = 3-methyl-2-oxobutanoate + H2O. It carries out the reaction (2R,3R)-2,3-dihydroxy-3-methylpentanoate = (S)-3-methyl-2-oxopentanoate + H2O. Its pathway is amino-acid biosynthesis; L-isoleucine biosynthesis; L-isoleucine from 2-oxobutanoate: step 3/4. It participates in amino-acid biosynthesis; L-valine biosynthesis; L-valine from pyruvate: step 3/4. Functions in the biosynthesis of branched-chain amino acids. Catalyzes the dehydration of (2R,3R)-2,3-dihydroxy-3-methylpentanoate (2,3-dihydroxy-3-methylvalerate) into 2-oxo-3-methylpentanoate (2-oxo-3-methylvalerate) and of (2R)-2,3-dihydroxy-3-methylbutanoate (2,3-dihydroxyisovalerate) into 2-oxo-3-methylbutanoate (2-oxoisovalerate), the penultimate precursor to L-isoleucine and L-valine, respectively. The protein is Dihydroxy-acid dehydratase of Nitrobacter winogradskyi (strain ATCC 25391 / DSM 10237 / CIP 104748 / NCIMB 11846 / Nb-255).